Consider the following 448-residue polypeptide: Protein Z-dependent protease inhibitor (448 aa).

Residues 1-21 (MRVASSLFLPVLLTEVWLVTS) form the signal peptide. The segment at 33–70 (VHLESQDYENQTWEEYTRTDPREEEEEEEEKEEGKDEE) is disordered. The span at 54–63 (REEEEEEEEK) shows a compositional bias: acidic residues. The N-linked (GlcNAc...) asparagine glycan is linked to N81. The segment at 140-157 (AGPLILPALFKKVKETFS) is heparin-binding. N-linked (GlcNAc...) asparagine glycosylation is found at N184, N278, and N299.

It belongs to the serpin family. Phosphorylated by FAM20C in the extracellular medium. Detectable in liver, but not in heart, brain, spleen, lung, kidney, skeletal muscle or testes.

The protein localises to the secreted. Functionally, inhibits activity of the coagulation protease factor Xa in the presence of PROZ, calcium and phospholipids. Also inhibits factor XIa in the absence of cofactors. The sequence is that of Protein Z-dependent protease inhibitor (Serpina10) from Mus musculus (Mouse).